The sequence spans 255 residues: Type III pantothenate kinase (255 aa).

6 to 13 (DIGNTNIK) contributes to the ATP binding site. 107-110 (GADR) serves as a coordination point for substrate. The active-site Proton acceptor is the aspartate 109. Position 132 (threonine 132) interacts with ATP. Residue threonine 184 participates in substrate binding.

It belongs to the type III pantothenate kinase family. As to quaternary structure, homodimer. Requires NH4(+) as cofactor. It depends on K(+) as a cofactor.

The protein resides in the cytoplasm. The enzyme catalyses (R)-pantothenate + ATP = (R)-4'-phosphopantothenate + ADP + H(+). It functions in the pathway cofactor biosynthesis; coenzyme A biosynthesis; CoA from (R)-pantothenate: step 1/5. In terms of biological role, catalyzes the phosphorylation of pantothenate (Pan), the first step in CoA biosynthesis. This chain is Type III pantothenate kinase, found in Roseiflexus castenholzii (strain DSM 13941 / HLO8).